The sequence spans 147 residues: uncharacterized protein (147 aa).

4 helical membrane-spanning segments follow: residues 13 to 33 (LSLV…IIGL), 45 to 65 (LFVG…AYFL), 80 to 100 (YLFT…LILI), and 116 to 136 (WGFF…IIPY).

It localises to the cell membrane. This is an uncharacterized protein from Methanocaldococcus jannaschii (strain ATCC 43067 / DSM 2661 / JAL-1 / JCM 10045 / NBRC 100440) (Methanococcus jannaschii).